Here is a 240-residue protein sequence, read N- to C-terminus: Uridylate kinase (240 aa).

An ATP-binding site is contributed by 13-16 (KFSG). Gly55 provides a ligand contact to UMP. Residues Gly56 and Arg60 each coordinate ATP. UMP contacts are provided by residues Asp76 and 137–144 (TGNPFFTT). Positions 164, 170, and 173 each coordinate ATP.

It belongs to the UMP kinase family. As to quaternary structure, homohexamer.

It localises to the cytoplasm. The catalysed reaction is UMP + ATP = UDP + ADP. It participates in pyrimidine metabolism; CTP biosynthesis via de novo pathway; UDP from UMP (UMPK route): step 1/1. Inhibited by UTP. Functionally, catalyzes the reversible phosphorylation of UMP to UDP. In Helicobacter pylori (strain HPAG1), this protein is Uridylate kinase.